A 49-amino-acid polypeptide reads, in one-letter code: MRVKITLACTETGDRNYITTKNKRTNPDRLELKKYSPRLKRHTIHRETK.

The protein belongs to the bacterial ribosomal protein bL33 family.

In Bacillus licheniformis (strain ATCC 14580 / DSM 13 / JCM 2505 / CCUG 7422 / NBRC 12200 / NCIMB 9375 / NCTC 10341 / NRRL NRS-1264 / Gibson 46), this protein is Large ribosomal subunit protein bL33B.